We begin with the raw amino-acid sequence, 512 residues long: Ribose import ATP-binding protein RbsA (512 aa).

2 consecutive ABC transporter domains span residues 6-242 (LELR…VNRE) and 252-496 (VPAG…TGAQ). Residue 38-45 (GENGAGKS) participates in ATP binding.

The protein belongs to the ABC transporter superfamily. Ribose importer (TC 3.A.1.2.1) family. As to quaternary structure, the complex is composed of an ATP-binding protein (RbsA), two transmembrane proteins (RbsC) and a solute-binding protein (RbsB).

It is found in the cell inner membrane. It catalyses the reaction D-ribose(out) + ATP + H2O = D-ribose(in) + ADP + phosphate + H(+). Its function is as follows. Part of the ABC transporter complex RbsABC involved in ribose import. Responsible for energy coupling to the transport system. This Pseudomonas putida (strain ATCC 47054 / DSM 6125 / CFBP 8728 / NCIMB 11950 / KT2440) protein is Ribose import ATP-binding protein RbsA.